Here is a 185-residue protein sequence, read N- to C-terminus: Ribosome-recycling factor (185 aa).

The protein belongs to the RRF family.

It is found in the cytoplasm. Responsible for the release of ribosomes from messenger RNA at the termination of protein biosynthesis. May increase the efficiency of translation by recycling ribosomes from one round of translation to another. The sequence is that of Ribosome-recycling factor from Treponema denticola (strain ATCC 35405 / DSM 14222 / CIP 103919 / JCM 8153 / KCTC 15104).